Reading from the N-terminus, the 454-residue chain is MNIKIPRIVIGGTGSGVGKTTIALALTQILRKKGLKVATFKCGPDYLDPTYHSRASQKICHNLDGWLMGKESVLNTFYQACHNVDIAIIEGMMGLFDGHSPNSEIGSTAEIAKWLASPVLVVLDTRGMARTVSAILKGLKIFDPDLNLAGAFANFTGSPSHIQLLKDASTEVPILGGLCKHSEQTFPERHLGLYSASEENVSEEKFNFWGEEGEKSLEVNSILEIANSAPEISIPVSNINTTLKRCKIGIAMDSAFHFYYEENLMRLRQAGAELVFFSPLSDSRLTDVDGLYFGGGYPEVFAPTLSKNKSLLNYIRDLSYKNIPIYAECGGLMYLSKGIKLVEGEFFPMLGLISATSIMEKKLKALGYVEVTTKKETIFGEVGLRFRGHQFRYSDLELDESNPIELVYNLRKRKSDQVSEEGYSKNSILASYIHAHWASNPNLAEGFVQSCLRK.

The region spanning 247-442 (KIGIAMDSAF…IHAHWASNPN (196 aa)) is the GATase cobBQ-type domain. C329 functions as the Nucleophile in the catalytic mechanism.

It belongs to the CobB/CbiA family. Mg(2+) serves as cofactor.

It catalyses the reaction cob(II)yrinate + 2 L-glutamine + 2 ATP + 2 H2O = cob(II)yrinate a,c diamide + 2 L-glutamate + 2 ADP + 2 phosphate + 2 H(+). Its pathway is cofactor biosynthesis; adenosylcobalamin biosynthesis; cob(II)yrinate a,c-diamide from sirohydrochlorin (anaerobic route): step 10/10. In terms of biological role, catalyzes the ATP-dependent amidation of the two carboxylate groups at positions a and c of cobyrinate, using either L-glutamine or ammonia as the nitrogen source. The polypeptide is Cobyrinate a,c-diamide synthase (Leptospira interrogans serogroup Icterohaemorrhagiae serovar copenhageni (strain Fiocruz L1-130)).